We begin with the raw amino-acid sequence, 433 residues long: Peptidoglycan glycosyltransferase RodA (433 aa).

12 helical membrane passes run 9-29 (FDYL…LFIY), 44-64 (YLKQ…VSMY), 74-94 (TLIF…GRYV), 100-120 (WIGV…AYIL), 158-178 (LGTA…AGFP), 181-201 (LIFA…LPLW), 221-241 (LSLF…VGYL), 249-269 (YWIT…LLGV), 295-315 (WHII…MGYL), 341-361 (WGFV…LHTL), 378-398 (GVLG…MGIM), and 400-420 (ITGI…TAMI).

Belongs to the SEDS family. MrdB/RodA subfamily.

The protein resides in the cell inner membrane. It carries out the reaction [GlcNAc-(1-&gt;4)-Mur2Ac(oyl-L-Ala-gamma-D-Glu-L-Lys-D-Ala-D-Ala)](n)-di-trans,octa-cis-undecaprenyl diphosphate + beta-D-GlcNAc-(1-&gt;4)-Mur2Ac(oyl-L-Ala-gamma-D-Glu-L-Lys-D-Ala-D-Ala)-di-trans,octa-cis-undecaprenyl diphosphate = [GlcNAc-(1-&gt;4)-Mur2Ac(oyl-L-Ala-gamma-D-Glu-L-Lys-D-Ala-D-Ala)](n+1)-di-trans,octa-cis-undecaprenyl diphosphate + di-trans,octa-cis-undecaprenyl diphosphate + H(+). It functions in the pathway cell wall biogenesis; peptidoglycan biosynthesis. Its function is as follows. Peptidoglycan polymerase that is essential for cell wall elongation. The protein is Peptidoglycan glycosyltransferase RodA of Treponema pallidum (strain Nichols).